Consider the following 215-residue polypeptide: Dual specificity phosphatase 29 (215 aa).

The Tyrosine-protein phosphatase domain maps to 53–201 (HVNEVWPRLH…LRELDKQLVK (149 aa)). 145–152 (HCAMGRSR) serves as a coordination point for substrate. Cysteine 146 serves as the catalytic Phosphocysteine intermediate.

The protein belongs to the protein-tyrosine phosphatase family. Non-receptor class dual specificity subfamily. As to quaternary structure, homodimer. Interacts with PRKAA2.

It is found in the cytoplasm. The protein localises to the nucleus. It carries out the reaction O-phospho-L-tyrosyl-[protein] + H2O = L-tyrosyl-[protein] + phosphate. It catalyses the reaction O-phospho-L-seryl-[protein] + H2O = L-seryl-[protein] + phosphate. The enzyme catalyses O-phospho-L-threonyl-[protein] + H2O = L-threonyl-[protein] + phosphate. Its function is as follows. Dual specificity phosphatase able to dephosphorylate phosphotyrosine, phosphoserine and phosphothreonine residues within the same substrate, with a preference for phosphotyrosine as a substrate. Involved in the modulation of intracellular signaling cascades. In skeletal muscle regulates systemic glucose homeostasis by activating, AMPK, an energy sensor protein kinase. Affects MAP kinase signaling though modulation of the MAPK1/2 cascade in skeletal muscle promoting muscle cell differentiation, development and atrophy. This chain is Dual specificity phosphatase 29 (Dusp29), found in Rattus norvegicus (Rat).